The following is a 295-amino-acid chain: Tyrosine recombinase XerD (295 aa).

The region spanning 1–85 (METIIEEYLK…TIRSFHQFAL (85 aa)) is the Core-binding (CB) domain. Residues 106 to 289 (KLPDVLDVEE…SKTQIRQMYN (184 aa)) enclose the Tyr recombinase domain. Catalysis depends on residues Arg-146, Lys-170, His-241, Arg-244, and His-267. Tyr-276 serves as the catalytic O-(3'-phospho-DNA)-tyrosine intermediate.

It belongs to the 'phage' integrase family. XerD subfamily. In terms of assembly, forms a cyclic heterotetrameric complex composed of two molecules of XerC and two molecules of XerD.

It is found in the cytoplasm. In terms of biological role, site-specific tyrosine recombinase, which acts by catalyzing the cutting and rejoining of the recombining DNA molecules. The XerC-XerD complex is essential to convert dimers of the bacterial chromosome into monomers to permit their segregation at cell division. It also contributes to the segregational stability of plasmids. The chain is Tyrosine recombinase XerD from Staphylococcus haemolyticus (strain JCSC1435).